We begin with the raw amino-acid sequence, 150 residues long: CASP-like protein 2 (150 aa).

Topologically, residues 1–17 (MKPEAGDGRSGWRWVAT) are cytoplasmic. A helical membrane pass occupies residues 18-38 (FDLILRLAAIVATSTAVLAAM). The Extracellular segment spans residues 39-41 (GKT). A helical membrane pass occupies residues 42–62 (FVVVVNGVACFYLLMSLPVSI). Over 63–82 (FNIMRPGACPANRAVLTALD) the chain is Cytoplasmic. A helical membrane pass occupies residues 83-103 (MVTVALVTAGALVAGILYLVH). Residues 104–121 (KAGDTHADWFSIWSQLDS) are Extracellular-facing. The chain crosses the membrane as a helical span at residues 122–142 (LSYLAVLALILHVLLSGSILY). The Cytoplasmic portion of the chain corresponds to 143–150 (KQALNIMF).

This sequence belongs to the Casparian strip membrane proteins (CASP) family. In terms of assembly, homodimer and heterodimers.

Its subcellular location is the cell membrane. This is CASP-like protein 2 from Picea sitchensis (Sitka spruce).